The following is a 102-amino-acid chain: NADH-quinone oxidoreductase subunit K 1 (102 aa).

3 helical membrane passes run 5–25, 30–50, and 62–82; these read LYEV…CVVA, VIMM…TFVG, and VFSL…LAMV.

The protein belongs to the complex I subunit 4L family. NDH-1 is composed of 14 different subunits. Subunits NuoA, H, J, K, L, M, N constitute the membrane sector of the complex.

The protein resides in the cell inner membrane. It catalyses the reaction a quinone + NADH + 5 H(+)(in) = a quinol + NAD(+) + 4 H(+)(out). In terms of biological role, NDH-1 shuttles electrons from NADH, via FMN and iron-sulfur (Fe-S) centers, to quinones in the respiratory chain. The immediate electron acceptor for the enzyme in this species is believed to be ubiquinone. Couples the redox reaction to proton translocation (for every two electrons transferred, four hydrogen ions are translocated across the cytoplasmic membrane), and thus conserves the redox energy in a proton gradient. This is NADH-quinone oxidoreductase subunit K 1 from Geobacter sp. (strain M21).